We begin with the raw amino-acid sequence, 307 residues long: Elongation factor Ts (307 aa).

Residues 80 to 83 (TDFV) are involved in Mg(2+) ion dislocation from EF-Tu.

This sequence belongs to the EF-Ts family.

The protein resides in the cytoplasm. Its function is as follows. Associates with the EF-Tu.GDP complex and induces the exchange of GDP to GTP. It remains bound to the aminoacyl-tRNA.EF-Tu.GTP complex up to the GTP hydrolysis stage on the ribosome. In Xanthobacter autotrophicus (strain ATCC BAA-1158 / Py2), this protein is Elongation factor Ts.